We begin with the raw amino-acid sequence, 417 residues long: Gamma-glutamyl phosphate reductase (417 aa).

It belongs to the gamma-glutamyl phosphate reductase family.

Its subcellular location is the cytoplasm. The catalysed reaction is L-glutamate 5-semialdehyde + phosphate + NADP(+) = L-glutamyl 5-phosphate + NADPH + H(+). Its pathway is amino-acid biosynthesis; L-proline biosynthesis; L-glutamate 5-semialdehyde from L-glutamate: step 2/2. Catalyzes the NADPH-dependent reduction of L-glutamate 5-phosphate into L-glutamate 5-semialdehyde and phosphate. The product spontaneously undergoes cyclization to form 1-pyrroline-5-carboxylate. The chain is Gamma-glutamyl phosphate reductase from Hydrogenovibrio crunogenus (strain DSM 25203 / XCL-2) (Thiomicrospira crunogena).